The primary structure comprises 208 residues: HGLPAQCPNADGTMVHTCCLHGMPTFKLNFDSHFTIKTVVAQNGTELPESILPEATIDRIPPSSHDLESVRGNLVRKNVDRLSLQEVNSLVHALKRMQKDRSSDGFESIACFHALPPLCPNPTAKHRYACCLHGMATFPQWHRLYVVQFEQSLNRHGATVGVPYTDWTYPMKEVPHLLTSEKYTDPFTAVETFNPFNHGHLSLLSPET.

Histidine 1 contacts Cu cation. The interval 1–74 (HGLPAQCPNA…HDLESVRGNL (74 aa)) is unit E. The cysteines at positions 7 and 18 are disulfide-linked. The 2'-(S-cysteinyl)-histidine (Cys-His) cross-link spans 19 to 21 (CLH). N-linked (GlcNAc...) asparagine glycosylation occurs at asparagine 43. The unit F stretch occupies residues 75 to 208 (VRKNVDRLSL…GHLSLLSPET (134 aa)). Histidine 113 lines the Cu cation pocket. A disulfide bridge links cysteine 119 with cysteine 130. A cross-link (2'-(S-cysteinyl)-histidine (Cys-His)) is located at residues 131–133 (CLH). Residues histidine 133 and histidine 142 each coordinate Cu cation.

It belongs to the tyrosinase family. Hemocyanin subfamily. As to quaternary structure, decamers of large identical subunits (390 kDa), each containing 8 globular oxygen-binding functional units. Cu(2+) is required as a cofactor.

Its function is as follows. Hemocyanins are copper-containing oxygen carriers occurring freely dissolved in the hemolymph of many mollusks and arthropods. The polypeptide is Hemocyanin, units E and F (Sepia officinalis (Common cuttlefish)).